Here is a 684-residue protein sequence, read N- to C-terminus: Ski-like protein (684 aa).

Residues Lys-50 and Lys-70 each participate in a glycyl lysine isopeptide (Lys-Gly) (interchain with G-Cter in SUMO2) cross-link. A disordered region spans residues Ser-420–Pro-454. At Ser-452 the chain carries Phosphoserine. Glycyl lysine isopeptide (Lys-Gly) (interchain with G-Cter in SUMO2) cross-links involve residues Lys-489 and Lys-527. A coiled-coil region spans residues Arg-536 to Glu-684.

It belongs to the SKI family. Interacts with CPNE4 (via VWFA domain). Interacts with SMAD2, SMAD3 and RNF111. Isoform 1 interacts with WWP1. Ubiquitinated by RNF111 and ARK2C, promoting proteasomal degradation, leading to enhance the BMP-Smad signaling. In terms of tissue distribution, isoform SNON and isoform SNOA are widely expressed. Highest expression is found in skeletal muscle, followed by placenta and lung. Lowest expression in heart, brain and pancreas. Isoform SNOI expression is restricted to skeletal muscle.

May have regulatory role in cell division or differentiation in response to extracellular signals. This chain is Ski-like protein (SKIL), found in Homo sapiens (Human).